A 349-amino-acid chain; its full sequence is uncharacterized protein (349 aa).

The first 16 residues, 1 to 16, serve as a signal peptide directing secretion; it reads MLFKISFLALIASALA. Over 17–326 the chain is Lumenal; that stretch reads MSINSPTNGD…SSSSSSSAAS (310 aa). 2 disordered regions span residues 115 to 190 and 243 to 322; these read ASSS…SSYR and TNGT…SSSS. 3 stretches are compositionally biased toward low complexity: residues 116–176, 243–278, and 289–322; these read SSSS…SSRT, TNGTNSTNSTSTTSHSLTKLPTSSKSLTTSKTTASG, and STNDTTNTTDDATNTTSDSSSSSSASASSSSSSS. Residues 327-347 traverse the membrane as a helical segment; the sequence is LVSQPVGISAVIAFFAVALSL. Residues 348–349 lie on the Cytoplasmic side of the membrane; it reads TL.

It is found in the endoplasmic reticulum membrane. This is an uncharacterized protein from Schizosaccharomyces pombe (strain 972 / ATCC 24843) (Fission yeast).